The primary structure comprises 341 residues: Biotin synthase (341 aa).

In terms of domain architecture, Radical SAM core spans 43 to 266; sequence SEIQLSQLLS…IAVARIVCPK (224 aa). Residues cysteine 58, cysteine 62, and cysteine 65 each coordinate [4Fe-4S] cluster. Residues cysteine 102, cysteine 133, cysteine 193, and arginine 270 each coordinate [2Fe-2S] cluster.

The protein belongs to the radical SAM superfamily. Biotin synthase family. As to quaternary structure, homodimer. [4Fe-4S] cluster serves as cofactor. [2Fe-2S] cluster is required as a cofactor.

It carries out the reaction (4R,5S)-dethiobiotin + (sulfur carrier)-SH + 2 reduced [2Fe-2S]-[ferredoxin] + 2 S-adenosyl-L-methionine = (sulfur carrier)-H + biotin + 2 5'-deoxyadenosine + 2 L-methionine + 2 oxidized [2Fe-2S]-[ferredoxin]. It functions in the pathway cofactor biosynthesis; biotin biosynthesis; biotin from 7,8-diaminononanoate: step 2/2. In terms of biological role, catalyzes the conversion of dethiobiotin (DTB) to biotin by the insertion of a sulfur atom into dethiobiotin via a radical-based mechanism. The chain is Biotin synthase from Caulobacter vibrioides (strain ATCC 19089 / CIP 103742 / CB 15) (Caulobacter crescentus).